The sequence spans 680 residues: tRNA 5-methylaminomethyl-2-thiouridine biosynthesis bifunctional protein MnmC (680 aa).

The segment at 1–267 (MTAEPNKPCQ…MAAILSSDAP (267 aa)) is tRNA (mnm(5)s(2)U34)-methyltransferase. The FAD-dependent cmnm(5)s(2)U34 oxidoreductase stretch occupies residues 273–680 (IGGGLASAHL…LRKLLKGKSL (408 aa)).

This sequence in the N-terminal section; belongs to the methyltransferase superfamily. tRNA (mnm(5)s(2)U34)-methyltransferase family. It in the C-terminal section; belongs to the DAO family. The cofactor is FAD.

It localises to the cytoplasm. The enzyme catalyses 5-aminomethyl-2-thiouridine(34) in tRNA + S-adenosyl-L-methionine = 5-methylaminomethyl-2-thiouridine(34) in tRNA + S-adenosyl-L-homocysteine + H(+). Its function is as follows. Catalyzes the last two steps in the biosynthesis of 5-methylaminomethyl-2-thiouridine (mnm(5)s(2)U) at the wobble position (U34) in tRNA. Catalyzes the FAD-dependent demodification of cmnm(5)s(2)U34 to nm(5)s(2)U34, followed by the transfer of a methyl group from S-adenosyl-L-methionine to nm(5)s(2)U34, to form mnm(5)s(2)U34. This is tRNA 5-methylaminomethyl-2-thiouridine biosynthesis bifunctional protein MnmC from Shewanella sp. (strain W3-18-1).